A 430-amino-acid polypeptide reads, in one-letter code: Pyrokinin-1 receptor (430 aa).

Residues Met1–Pro16 are Extracellular-facing. Asn5 carries N-linked (GlcNAc...) asparagine glycosylation. The chain crosses the membrane as a helical span at residues Leu17–Gly37. Residues Asn38–Thr53 lie on the Cytoplasmic side of the membrane. A helical membrane pass occupies residues Ala54–Val74. The Extracellular segment spans residues Pro75–Gly96. Residues Cys94 and Cys171 are joined by a disulfide bond. The chain crosses the membrane as a helical span at residues Arg97 to Val117. Residues Glu118 to Arg140 lie on the Cytoplasmic side of the membrane. A helical membrane pass occupies residues Ile141–Gly161. The Extracellular segment spans residues Ile162–Ser185. The helical transmembrane segment at Thr186–Val206 threads the bilayer. Residues His207–Arg281 are Cytoplasmic-facing. Residues Val282–Ala302 traverse the membrane as a helical segment. The Extracellular segment spans residues Gln303 to His321. The chain crosses the membrane as a helical span at residues Glu322–Ile342. At Asn343–Asn430 the chain is on the cytoplasmic side. The segment covering Thr388–Ser397 has biased composition (polar residues). The disordered stretch occupies residues Thr388–Thr413.

The protein belongs to the G-protein coupled receptor 1 family.

The protein localises to the cell membrane. In terms of biological role, receptor for the neuropeptide CAP-3/pyrokinin-1 (TGPSASSGLWFGPRL-amide). Also activated weakly by other neuropeptides terminating in the sequence PRL-amide including pyrokinin-2, Hug-gamma, and ecdysis-triggering-hormone-1. The activity of this receptor is mediated by G proteins which activate a phosphatidyl-inositol-calcium second messenger system. This chain is Pyrokinin-1 receptor, found in Drosophila melanogaster (Fruit fly).